A 284-amino-acid polypeptide reads, in one-letter code: MASPARVKRSLPDLTHPELTSSGAPLVMVTAYDYPGARHAEAAGVDLILVGDSLGNVVLGYDSTAPVTLADMIHHGKAVRRGAPNTFLVVDLPFGTYHAGVTDAMRHAVRVIQETGADAVKMEGSTPEVLDVVRVLSRNGVPVMGHVGLMPQTAAAQGGLRVQGKDDDSARRTLEGAVALQEAGAFAVVLEAIPARLARLISERLSVATIGIGAGVHCDGQVLVYHDLLGLYEGEEKKIAKRYADLGREAREAIAHYAAEVRAREFPSKDNSFVMKDEVLDKLY.

Mg(2+) contacts are provided by D52 and D91. 3-methyl-2-oxobutanoate is bound by residues 52-53 (DS), D91, and K121. E123 contributes to the Mg(2+) binding site. Catalysis depends on E191, which acts as the Proton acceptor.

This sequence belongs to the PanB family. In terms of assembly, homodecamer; pentamer of dimers. The cofactor is Mg(2+).

The protein resides in the cytoplasm. The catalysed reaction is 3-methyl-2-oxobutanoate + (6R)-5,10-methylene-5,6,7,8-tetrahydrofolate + H2O = 2-dehydropantoate + (6S)-5,6,7,8-tetrahydrofolate. The protein operates within cofactor biosynthesis; (R)-pantothenate biosynthesis; (R)-pantoate from 3-methyl-2-oxobutanoate: step 1/2. Functionally, catalyzes the reversible reaction in which hydroxymethyl group from 5,10-methylenetetrahydrofolate is transferred onto alpha-ketoisovalerate to form ketopantoate. This chain is 3-methyl-2-oxobutanoate hydroxymethyltransferase, found in Deinococcus radiodurans (strain ATCC 13939 / DSM 20539 / JCM 16871 / CCUG 27074 / LMG 4051 / NBRC 15346 / NCIMB 9279 / VKM B-1422 / R1).